The chain runs to 640 residues: uncharacterized protein (640 aa).

Residues 594–614 are disordered; sequence QCSSDHCKPGSSETLPEATNE.

This is an uncharacterized protein from Rattus norvegicus (Rat).